The sequence spans 221 residues: UPF0502 protein Sputw3181_2381 (221 aa).

The protein belongs to the UPF0502 family.

This is UPF0502 protein Sputw3181_2381 from Shewanella sp. (strain W3-18-1).